Reading from the N-terminus, the 363-residue chain is Electron transfer flavoprotein subunit alpha, mitochondrial (363 aa).

The transit peptide at 1–24 directs the protein to the mitochondrion; the sequence is MTRTVLLRALTKNKFVASNAPRSI. 303-331 provides a ligand contact to FAD; sequence LYMAFGVSGAIQHLAGIKDSKVIVAVNKD.

This sequence belongs to the ETF alpha-subunit/FixB family. In terms of assembly, heterodimer of an alpha and a beta subunit. It depends on FAD as a cofactor.

It localises to the mitochondrion matrix. Its function is as follows. The electron transfer flavoprotein serves as a specific electron acceptor for several dehydrogenases, including five acyl-CoA dehydrogenases, glutaryl-CoA and sarcosine dehydrogenase. It transfers the electrons to the main mitochondrial respiratory chain via ETF-ubiquinone oxidoreductase (ETF dehydrogenase). Involved in leucine catabolism and in phytol degradation. In Arabidopsis thaliana (Mouse-ear cress), this protein is Electron transfer flavoprotein subunit alpha, mitochondrial (ETFA).